A 246-amino-acid polypeptide reads, in one-letter code: Tyrosine recombinase XerD-like (246 aa).

The 72-residue stretch at 1 to 72 (MINDINNFIE…AVNQFLFFLY (72 aa)) folds into the Core-binding (CB) domain. The 163-residue stretch at 84–246 (QETEKITLTQ…TPITLERYYR (163 aa)) folds into the Tyr recombinase domain. Active-site residues include K149 and R212. Y244 (O-(3'-phospho-DNA)-tyrosine intermediate) is an active-site residue.

Belongs to the 'phage' integrase family. XerD-like subfamily.

The protein localises to the cytoplasm. Putative tyrosine recombinase. Not involved in the cutting and rejoining of the recombining DNA molecules on dif(SL) site. This chain is Tyrosine recombinase XerD-like, found in Streptococcus agalactiae serotype III (strain NEM316).